A 341-amino-acid polypeptide reads, in one-letter code: HTH-type transcriptional repressor PurR (341 aa).

The 55-residue stretch at 2 to 56 (ATIKDVAKRAGVSTTTVSHVINKTRFVAENTRAAVWAAIKELNYSPSAVARSLKV) folds into the HTH lacI-type domain. Positions 4–23 (IKDVAKRAGVSTTTVSHVIN) form a DNA-binding region, H-T-H motif. A DNA-binding region spans residues 48–56 (SAVARSLKV). The hypoxanthine site is built by Tyr-73, Arg-190, Thr-192, Phe-221, and Asp-275.

As to quaternary structure, homodimer.

It participates in purine metabolism; purine nucleotide biosynthesis [regulation]. Its function is as follows. Is the main repressor of the genes involved in the de novo synthesis of purine nucleotides, regulating purB, purC, purEK, purF, purHD, purL, purMN and guaBA expression. PurR is allosterically activated to bind its cognate DNA by binding the purine corepressors, hypoxanthine or guanine, thereby effecting transcription repression. The sequence is that of HTH-type transcriptional repressor PurR from Proteus mirabilis (strain HI4320).